The primary structure comprises 210 residues: Small ribosomal subunit protein uS3 (210 aa).

One can recognise a KH type-2 domain in the interval 38–106 (LRSFLKKRLY…EVYLNIQEVR (69 aa)).

This sequence belongs to the universal ribosomal protein uS3 family. In terms of assembly, part of the 30S ribosomal subunit. Forms a tight complex with proteins S10 and S14.

In terms of biological role, binds the lower part of the 30S subunit head. Binds mRNA in the 70S ribosome, positioning it for translation. This Geotalea uraniireducens (strain Rf4) (Geobacter uraniireducens) protein is Small ribosomal subunit protein uS3.